The sequence spans 440 residues: Chromosome partition protein MukF (440 aa).

Residues 208-236 (LSETSGTLRELQDTLEAAGDKLQANLLRI) are leucine-zipper.

This sequence belongs to the MukF family. As to quaternary structure, interacts, and probably forms a ternary complex, with MukE and MukB via its C-terminal region. The complex formation is stimulated by calcium or magnesium. It is required for an interaction between MukE and MukB.

Its subcellular location is the cytoplasm. It is found in the nucleoid. Involved in chromosome condensation, segregation and cell cycle progression. May participate in facilitating chromosome segregation by condensation DNA from both sides of a centrally located replisome during cell division. Not required for mini-F plasmid partitioning. Probably acts via its interaction with MukB and MukE. Overexpression results in anucleate cells. It has a calcium binding activity. This is Chromosome partition protein MukF from Shigella boydii serotype 4 (strain Sb227).